A 299-amino-acid polypeptide reads, in one-letter code: Coenzyme PQQ synthesis protein B (299 aa).

This sequence belongs to the PqqB family.

The protein operates within cofactor biosynthesis; pyrroloquinoline quinone biosynthesis. In terms of biological role, may be involved in the transport of PQQ or its precursor to the periplasm. The protein is Coenzyme PQQ synthesis protein B of Xanthomonas campestris pv. campestris (strain 8004).